The following is a 360-amino-acid chain: Glucan endo-1,3-beta-glucosidase B (360 aa).

An N-terminal signal peptide occupies residues 1–25; sequence MATSQIAIIVLLGLLVATNIHITEA. Gln26 bears the Pyrrolidone carboxylic acid mark. Glu120 functions as the Proton donor in the catalytic mechanism. Glu265 (nucleophile) is an active-site residue. Positions 341 to 360 are cleaved as a propeptide — removed in mature form; it reads VSERVWDITNSTASSLTSEI. Asn350 carries N-linked (GlcNAc...) asparagine glycosylation.

It belongs to the glycosyl hydrolase 17 family.

The protein localises to the vacuole. The enzyme catalyses Hydrolysis of (1-&gt;3)-beta-D-glucosidic linkages in (1-&gt;3)-beta-D-glucans.. Functionally, implicated in the defense of plants against pathogens. The protein is Glucan endo-1,3-beta-glucosidase B of Solanum lycopersicum (Tomato).